The primary structure comprises 614 residues: Zinc metalloproteinase-disintegrin-like HR1b (614 aa).

A signal peptide spans 1–20 (MIQVLLVTICLAVFPYQGSS). A propeptide spanning residues 21–191 (IILESGNVND…KASKLVVTAE (171 aa)) is cleaved from the precursor. Glutamine 192 carries the post-translational modification Pyrrolidone carboxylic acid. Residues 198 to 394 (RYIKLAIVVD…HKPQCILNAP (197 aa)) enclose the Peptidase M12B domain. Asparagine 264 is a glycosylation site (N-linked (GlcNAc...) asparagine). Disulfide bonds link cysteine 309/cysteine 389, cysteine 349/cysteine 373, and cysteine 351/cysteine 356. Histidine 334 contacts Zn(2+). Glutamate 335 is a catalytic residue. Residues histidine 338 and histidine 344 each contribute to the Zn(2+) site. N-linked (GlcNAc...) asparagine glycosylation occurs at asparagine 372. Positions 395–398 (SKTD) are excised as a propeptide. Positions 402–488 (PPVCGNELLE…DCPTDRFHRN (87 aa)) constitute a Disintegrin domain. Residues valine 404, asparagine 407, leucine 409, glutamate 411, glutamate 414, and aspartate 417 each coordinate Ca(2+). Cystine bridges form between cysteine 405-cysteine 424, cysteine 405-cysteine 434, cysteine 416-cysteine 429, cysteine 416-cysteine 434, cysteine 418-cysteine 424, cysteine 428-cysteine 451, cysteine 442-cysteine 448, cysteine 447-cysteine 473, cysteine 460-cysteine 480, cysteine 467-cysteine 492, cysteine 467-cysteine 499, cysteine 492-cysteine 504, cysteine 499-cysteine 504, cysteine 511-cysteine 526, cysteine 511-cysteine 561, cysteine 526-cysteine 568, cysteine 539-cysteine 549, cysteine 549-cysteine 556, cysteine 556-cysteine 593, cysteine 561-cysteine 568, cysteine 587-cysteine 598, and cysteine 593-cysteine 598. Positions 466-468 (ECD) match the D/ECD-tripeptide motif. N-linked (GlcNAc...) asparagine glycosylation occurs at asparagine 518. Asparagine 571 carries N-linked (GlcNAc...) asparagine glycosylation. Positions 608-614 (TTVFSLI) are excised as a propeptide.

Belongs to the venom metalloproteinase (M12B) family. P-III subfamily. P-IIIb sub-subfamily. In terms of assembly, monomer. Requires Zn(2+) as cofactor. In terms of tissue distribution, expressed by the venom gland.

The protein resides in the secreted. In terms of biological role, zinc protease that induces hemorrhage. Has preference for Tyr, Leu, Arg, Met, and Phe at the P1 position, in descending order (in vitro). Shows equal preference for the sequences of Ala-Asp and Arg-Ile at the P3-P2 position with different enzyme cleavage sites across the P1 position: the N-terminus side for Ala-Asp and the C-terminus side for Arg-Ile. Functionally, inhibits platelet aggregation induced by ADP, thrombin, platelet-activating factor and collagen. Acts by inhibiting fibrinogen interaction with platelet receptors alpha-IIb/beta-3 (ITGA2B/ITGB3). This is Zinc metalloproteinase-disintegrin-like HR1b from Protobothrops flavoviridis (Habu).